A 426-amino-acid chain; its full sequence is Serine/threonine-protein kinase ssn3 (426 aa).

The region spanning 39–368 (YHIVGFISSG…AKEALEHPYF (330 aa)) is the Protein kinase domain. Residues 45–53 (ISSGTYGRV) and Lys-69 each bind ATP. The active-site Proton acceptor is the Asp-171. Residues 389–398 (RRITHDDNDI) are compositionally biased toward basic and acidic residues. Residues 389-426 (RRITHDDNDIRSGSLPGTKRSGLPDDSLMSRAAKRMKE) form a disordered region.

Belongs to the protein kinase superfamily. CMGC Ser/Thr protein kinase family. CDC2/CDKX subfamily. Component of the srb8-11 complex, a regulatory module of the Mediator complex. Mg(2+) serves as cofactor.

The protein resides in the nucleus. The catalysed reaction is L-seryl-[protein] + ATP = O-phospho-L-seryl-[protein] + ADP + H(+). It carries out the reaction L-threonyl-[protein] + ATP = O-phospho-L-threonyl-[protein] + ADP + H(+). It catalyses the reaction [DNA-directed RNA polymerase] + ATP = phospho-[DNA-directed RNA polymerase] + ADP + H(+). Its function is as follows. Component of the srb8-11 complex. The srb8-11 complex is a regulatory module of the Mediator complex which is itself involved in regulation of basal and activated RNA polymerase II-dependent transcription. The srb8-11 complex may be involved in the transcriptional repression of a subset of genes regulated by Mediator. It may inhibit the association of the Mediator complex with RNA polymerase II to form the holoenzyme complex. The srb8-11 complex phosphorylates the C-terminal domain (CTD) of the largest subunit of RNA polymerase II. The protein is Serine/threonine-protein kinase ssn3 (ssn3) of Emericella nidulans (strain FGSC A4 / ATCC 38163 / CBS 112.46 / NRRL 194 / M139) (Aspergillus nidulans).